We begin with the raw amino-acid sequence, 117 residues long: Large ribosomal subunit protein uL18 (117 aa).

This sequence belongs to the universal ribosomal protein uL18 family. As to quaternary structure, part of the 50S ribosomal subunit; part of the 5S rRNA/L5/L18/L25 subcomplex. Contacts the 5S and 23S rRNAs.

This is one of the proteins that bind and probably mediate the attachment of the 5S RNA into the large ribosomal subunit, where it forms part of the central protuberance. The polypeptide is Large ribosomal subunit protein uL18 (Acidithiobacillus ferrooxidans (strain ATCC 23270 / DSM 14882 / CIP 104768 / NCIMB 8455) (Ferrobacillus ferrooxidans (strain ATCC 23270))).